Here is a 714-residue protein sequence, read N- to C-terminus: Protein artemis (714 aa).

Disordered regions lie at residues 391 to 500 (ELFD…ESNA), 516 to 577 (ESSE…TVLI), 598 to 617 (ALLS…RWKL), and 638 to 683 (EKDA…LTPD). Residues 427–440 (NESTESYRANTAYT) are compositionally biased toward polar residues. The span at 447-468 (VDCEESNDDDDDDDDDDKEDDS) shows a compositional bias: acidic residues. 2 stretches are compositionally biased toward polar residues: residues 484–500 (SIAS…ESNA) and 532–543 (GSQSLFSDSDGV). Positions 544 to 561 (SDSTHISSQNSSQSTHIS) are enriched in low complexity. A compositionally biased stretch (polar residues) spans 562–577 (EQGSQGWDSQMDTVLI). Composition is skewed to basic and acidic residues over residues 603-615 (DTPR…DSRW) and 660-670 (RTPDLELKRDS). The residue at position 670 (S670) is a Phosphoserine; by ATM.

This sequence belongs to the DNA repair metallo-beta-lactamase (DRMBL) family. As to quaternary structure, interacts with PRKDC. Post-translationally, phosphorylation on undefined residues by PRKDC may stimulate endonucleolytic activity on 5' and 3' hairpins and overhangs. PRKDC must remain present, even after phosphorylation, for efficient hairpin opening.

The protein localises to the nucleus. Its function is as follows. Required for V(D)J recombination, the process by which exons encoding the antigen-binding domains of immunoglobulins and T-cell receptor proteins are assembled from individual V, (D), and J gene segments. V(D)J recombination is initiated by the lymphoid specific RAG endonuclease complex, which generates site specific DNA double strand breaks (DSBs). These DSBs present two types of DNA end structures: hairpin sealed coding ends and phosphorylated blunt signal ends. These ends are independently repaired by the non homologous end joining (NHEJ) pathway to form coding and signal joints respectively. This protein exhibits single-strand specific 5'-3' exonuclease activity in isolation, and acquires endonucleolytic activity on 5' and 3' hairpins and overhangs when in a complex with PRKDC. The latter activity is required specifically for the resolution of closed hairpins prior to the formation of the coding joint. May also be required for the repair of complex DSBs induced by ionizing radiation, which require substantial end-processing prior to religation by NHEJ. The sequence is that of Protein artemis (DCLRE1C) from Gallus gallus (Chicken).